The primary structure comprises 450 residues: UDP-N-acetylglucosamine--peptide N-acetylglucosaminyltransferase stabilizing protein GtfB (450 aa).

Belongs to the GtfB family. Forms a heterotetramer with 2 subunits each of GtfA and GtfB. Part of the accessory SecA2/SecY2 protein translocation apparatus required to export cell wall protein GspB.

It localises to the cell membrane. The protein operates within protein modification; protein glycosylation. In terms of biological role, required for polymorphic O-glycosylation of GspB, a serine-rich repeat cell wall protein encoded upstream in the same operon. A substrate-binding protein that is part of the accessory SecA2/SecY2 system specifically required to export GspB. The GtfA-GtfB complex adds GlcNAc from UDP-GlcNAc to GspB, attaching the first sugar residue. Upon coexpression in E.coli with GtfA glycosylates GspB constructs. Binds the GspB protein substrate; alone this subunit only recognizes partially glycosylated GspB, but is constrained by GtfA to also recognize unglycosylated protein. The enzyme probably modifies its tertiary conformation by opening and closing its intersubunit interfaces to accomodate the increasingly glycosylated substrate. This Streptococcus gordonii protein is UDP-N-acetylglucosamine--peptide N-acetylglucosaminyltransferase stabilizing protein GtfB.